Here is a 376-residue protein sequence, read N- to C-terminus: Heat-inducible transcription repressor HrcA (376 aa).

Belongs to the HrcA family.

Its function is as follows. Negative regulator of class I heat shock genes (grpE-dnaK-dnaJ and groELS operons). Prevents heat-shock induction of these operons. This chain is Heat-inducible transcription repressor HrcA, found in Chloroflexus aggregans (strain MD-66 / DSM 9485).